The sequence spans 369 residues: Chaperone protein DnaJ (369 aa).

One can recognise a J domain in the interval 7-73 (DYYEILGVPR…QKRAMYDRFG (67 aa)). The CR-type zinc finger occupies 143–225 (GAEIPVEYER…CGGSGRVLRK (83 aa)). Zn(2+) contacts are provided by C156, C159, C173, C176, C199, C202, C213, and C216. CXXCXGXG motif repeat units follow at residues 156–163 (CPRCGGTG), 173–180 (CPSCGGTG), 199–206 (CERCGGTG), and 213–220 (CHECGGSG).

It belongs to the DnaJ family. In terms of assembly, homodimer. Zn(2+) is required as a cofactor.

It localises to the cytoplasm. Participates actively in the response to hyperosmotic and heat shock by preventing the aggregation of stress-denatured proteins and by disaggregating proteins, also in an autonomous, DnaK-independent fashion. Unfolded proteins bind initially to DnaJ; upon interaction with the DnaJ-bound protein, DnaK hydrolyzes its bound ATP, resulting in the formation of a stable complex. GrpE releases ADP from DnaK; ATP binding to DnaK triggers the release of the substrate protein, thus completing the reaction cycle. Several rounds of ATP-dependent interactions between DnaJ, DnaK and GrpE are required for fully efficient folding. Also involved, together with DnaK and GrpE, in the DNA replication of plasmids through activation of initiation proteins. In Thermotoga sp. (strain RQ2), this protein is Chaperone protein DnaJ.